The chain runs to 322 residues: Probable uridine nucleosidase 2 (322 aa).

Active-site residues include Asp14 and His246.

It belongs to the IUNH family. As to quaternary structure, component of the NSH heterocomplex made of URH1/NSH1 and URH2/NSH2 which exhibits strong xanthosine nucleosidase activity. Interacts with URH1. As to expression, expressed in roots, seedlings and flowers.

It is found in the cytoplasm. The protein resides in the cytosol. The catalysed reaction is uridine + H2O = D-ribose + uracil. The enzyme catalyses inosine + H2O = hypoxanthine + D-ribose. It carries out the reaction xanthosine + H2O = D-ribose + xanthine. Involved in pyrimidine breakdown, especially in response to dark stress. In the presence of URH1, exhibits efficient inosine and xanthosine hydrolytic activities. Support inosine breakdown especially during the late phase of senescence. This Arabidopsis thaliana (Mouse-ear cress) protein is Probable uridine nucleosidase 2.